Here is a 465-residue protein sequence, read N- to C-terminus: Fumarate hydratase class II (465 aa).

Residues Ser99–Thr101, His130–Asp133, Ser140–Asn142, and Thr188 contribute to the substrate site. The Proton donor/acceptor role is filled by His189. Ser319 is an active-site residue. Residues Ser320 and Lys325–Asn327 contribute to the substrate site.

It belongs to the class-II fumarase/aspartase family. Fumarase subfamily. As to quaternary structure, homotetramer.

It is found in the cytoplasm. It catalyses the reaction (S)-malate = fumarate + H2O. Its pathway is carbohydrate metabolism; tricarboxylic acid cycle; (S)-malate from fumarate: step 1/1. Functionally, involved in the TCA cycle. Catalyzes the stereospecific interconversion of fumarate to L-malate. This chain is Fumarate hydratase class II, found in Prochlorococcus marinus (strain SARG / CCMP1375 / SS120).